Reading from the N-terminus, the 273-residue chain is Outer surface protein A (273 aa).

An N-terminal signal peptide occupies residues 1-16; it reads MKKYLLGIGLILALIA. A lipid anchor (N-palmitoyl cysteine) is attached at Cys17. Cys17 is lipidated: S-diacylglycerol cysteine.

The protein belongs to the OspA lipoprotein family.

It is found in the cell outer membrane. Its subcellular location is the cell surface. The chain is Outer surface protein A from Borreliella burgdorferi (Lyme disease spirochete).